The chain runs to 1034 residues: Protein ITPRID1 (1034 aa).

3 disordered regions span residues 223–290 (KTQQ…PTKP), 442–486 (QVSS…KSMT), and 624–678 (QSSL…SSWS). Polar residues-rich tracts occupy residues 443 to 453 (VSSMTGSQSPT) and 465 to 476 (HSPASQQDSLQE). Low complexity predominate over residues 477–486 (SYGSKSKSMT). Residues 669–678 (TDSNAASSWS) show a composition bias toward polar residues. The stretch at 843–902 (EMETMKMVCQSFREHLEEIEQHFMGQQALYPRDMSEEEREEAEYLRTLREALRQQVAELA) forms a coiled coil.

In Mus musculus (Mouse), this protein is Protein ITPRID1 (Itprid1).